The primary structure comprises 723 residues: DNA-binding protein RFX2 (723 aa).

Positions 1-46 are disordered; that stretch reads MQNSEGGADSPASVALRPSAAAPPVPASPQRVLVQAASSAPKGAQM. Residues 10–20 are compositionally biased toward low complexity; the sequence is SPASVALRPSA. A Phosphoserine modification is found at serine 28. Positions 199 to 274 form a DNA-binding region, RFX-type winged-helix; it reads HLQWLLDNYE…YHYYGIRLKP (76 aa). The segment at 292–332 is disordered; sequence QQPMHQKPRYRPAQKTDSLGDSGSHSSLHSTPEQTMAAQSQ. Residues 307 to 322 are compositionally biased toward low complexity; it reads TDSLGDSGSHSSLHST. Polar residues predominate over residues 323-332; that stretch reads PEQTMAAQSQ. The residue at position 416 (serine 416) is a Phosphoserine. The segment at 689–723 is disordered; the sequence is GDERRGSEAGPDAHSLGEPLVKRERSDPNHSLQGI.

The protein belongs to the RFX family. As to quaternary structure, homodimer; probably only forms homodimers in testis. Heterodimer; heterodimerizes with RFX1 and RFX3.

It is found in the nucleus. Its subcellular location is the cytoplasm. Functionally, transcription factor that acts as a key regulator of spermatogenesis. Acts by regulating expression of genes required for the haploid phase during spermiogenesis, such as genes required for cilium assembly and function. Recognizes and binds the X-box, a regulatory motif with DNA sequence 5'-GTNRCC(0-3N)RGYAAC-3' present on promoters. Probably activates transcription of the testis-specific histone gene H1-6. In Macaca fascicularis (Crab-eating macaque), this protein is DNA-binding protein RFX2 (RFX2).